The primary structure comprises 125 residues: Large ribosomal subunit protein bL12 (125 aa).

Belongs to the bacterial ribosomal protein bL12 family. In terms of assembly, homodimer. Part of the ribosomal stalk of the 50S ribosomal subunit. Forms a multimeric L10(L12)X complex, where L10 forms an elongated spine to which 2 to 4 L12 dimers bind in a sequential fashion. Binds GTP-bound translation factors.

Functionally, forms part of the ribosomal stalk which helps the ribosome interact with GTP-bound translation factors. Is thus essential for accurate translation. The polypeptide is Large ribosomal subunit protein bL12 (Erythrobacter litoralis (strain HTCC2594)).